The chain runs to 119 residues: Toxin ICK-11 (119 aa).

An N-terminal signal peptide occupies residues M1–A19. 4 disulfides stabilise this stretch: C59–C74, C67–C80, C71–C116, and C73–C87.

This sequence belongs to the neurotoxin 25 family. ICK-8 subfamily. As to expression, expressed by the venom gland.

The protein localises to the secreted. Ion channel inhibitor. The chain is Toxin ICK-11 from Trittame loki (Brush-footed trapdoor spider).